A 469-amino-acid chain; its full sequence is Glutamine synthetase (469 aa).

Residues 14-99 enclose the GS beta-grasp domain; that stretch reads NDVKFVDLRF…FCDILDPVSG (86 aa). The GS catalytic domain occupies 106-469; sequence PRGTAKKAEA…PVEFDMYYSV (364 aa). The Mg(2+) site is built by E131 and E133. E209 is an ATP binding site. Mg(2+) contacts are provided by E214 and E221. L-glutamate is bound by residues 265 to 266 and G266; that span reads NG. Residue H270 participates in Mg(2+) binding. ATP contacts are provided by residues 272 to 274 and S274; that span reads HLS. 3 residues coordinate L-glutamate: R322, E328, and R340. Residues R340, R345, and K353 each contribute to the ATP site. E358 contacts Mg(2+). R360 lines the L-glutamate pocket. Residue Y398 is modified to O-AMP-tyrosine.

The protein belongs to the glutamine synthetase family. Oligomer of 12 subunits arranged in the form of two hexameric ring. Mg(2+) is required as a cofactor.

The protein resides in the cytoplasm. The enzyme catalyses L-glutamate + NH4(+) + ATP = L-glutamine + ADP + phosphate + H(+). The activity of this enzyme could be controlled by adenylation under conditions of abundant glutamine. Functionally, catalyzes the ATP-dependent biosynthesis of glutamine from glutamate and ammonia. This is Glutamine synthetase from Rhizobium meliloti (strain 1021) (Ensifer meliloti).